The following is a 104-amino-acid chain: UPF0212 protein PH1312 (104 aa).

The protein belongs to the UPF0212 family.

The protein is UPF0212 protein PH1312 of Pyrococcus horikoshii (strain ATCC 700860 / DSM 12428 / JCM 9974 / NBRC 100139 / OT-3).